The primary structure comprises 64 residues: Alpha-conotoxin CnIL (64 aa).

An N-terminal signal peptide occupies residues 1–21 (MGMRMMFTVFLLVVLTTTVVS). A propeptide spanning residues 22 to 49 (FPSDSASDGRDDEAKDERSDIYESKRDG) is cleaved from the precursor. Intrachain disulfides connect Cys51-Cys56 and Cys52-Cys62. Cys62 is modified (cysteine amide).

Belongs to the conotoxin A superfamily. In terms of tissue distribution, expressed by the venom duct.

It localises to the secreted. In Conus consors (Singed cone), this protein is Alpha-conotoxin CnIL.